Consider the following 39-residue polypeptide: Cytochrome b559 subunit beta (39 aa).

Residues 14-30 form a helical membrane-spanning segment; sequence WLAVHGLAVPTVFFLGS. H18 contributes to the heme binding site.

Belongs to the PsbE/PsbF family. Heterodimer of an alpha subunit and a beta subunit. PSII is composed of 1 copy each of membrane proteins PsbA, PsbB, PsbC, PsbD, PsbE, PsbF, PsbH, PsbI, PsbJ, PsbK, PsbL, PsbM, PsbT, PsbX, PsbY, PsbZ, Psb30/Ycf12, at least 3 peripheral proteins of the oxygen-evolving complex and a large number of cofactors. It forms dimeric complexes. Heme b serves as cofactor.

It localises to the plastid. The protein localises to the chloroplast thylakoid membrane. Its function is as follows. This b-type cytochrome is tightly associated with the reaction center of photosystem II (PSII). PSII is a light-driven water:plastoquinone oxidoreductase that uses light energy to abstract electrons from H(2)O, generating O(2) and a proton gradient subsequently used for ATP formation. It consists of a core antenna complex that captures photons, and an electron transfer chain that converts photonic excitation into a charge separation. This Cedrus deodara (Deodar cedar) protein is Cytochrome b559 subunit beta.